Reading from the N-terminus, the 142-residue chain is Galactose-6-phosphate isomerase subunit LacA (142 aa).

This sequence belongs to the LacAB/RpiB family. As to quaternary structure, heteromultimeric protein consisting of LacA and LacB.

It carries out the reaction aldehydo-D-galactose 6-phosphate = keto-D-tagatose 6-phosphate. The protein operates within carbohydrate metabolism; D-galactose 6-phosphate degradation; D-tagatose 6-phosphate from D-galactose 6-phosphate: step 1/1. In Clostridium acetobutylicum (strain ATCC 824 / DSM 792 / JCM 1419 / IAM 19013 / LMG 5710 / NBRC 13948 / NRRL B-527 / VKM B-1787 / 2291 / W), this protein is Galactose-6-phosphate isomerase subunit LacA.